The following is a 698-amino-acid chain: Polyribonucleotide nucleotidyltransferase (698 aa).

Residues aspartate 485 and aspartate 491 each contribute to the Mg(2+) site. Residues 552-611 (PRITTIKINPEKIRDVIGKGGAVIRALTEETGTTIELDDDGTVKIASSNGEATKEAIRRI) form the KH domain. Positions 621 to 689 (GRVYNGKVIR…RQGRVRLSIK (69 aa)) constitute an S1 motif domain.

Belongs to the polyribonucleotide nucleotidyltransferase family. Component of the RNA degradosome, which is a multiprotein complex involved in RNA processing and mRNA degradation. Mg(2+) serves as cofactor.

It localises to the cytoplasm. The enzyme catalyses RNA(n+1) + phosphate = RNA(n) + a ribonucleoside 5'-diphosphate. Involved in mRNA degradation. Catalyzes the phosphorolysis of single-stranded polyribonucleotides processively in the 3'- to 5'-direction. The polypeptide is Polyribonucleotide nucleotidyltransferase (Shewanella denitrificans (strain OS217 / ATCC BAA-1090 / DSM 15013)).